Consider the following 304-residue polypeptide: L-xylo-3-hexulose reductase (304 aa).

NADP(+)-binding residues include isoleucine 19, aspartate 68, and asparagine 107. Residues serine 163 and serine 164 each act as proton donor in the active site. The NADP(+) site is built by tyrosine 177, lysine 181, and alanine 209. The active-site Proton acceptor is the tyrosine 177. Lysine 181 acts as the Lowers pKa of active site Tyr in catalysis.

This sequence belongs to the short-chain dehydrogenases/reductases (SDR) family.

The catalysed reaction is D-sorbitol + NADP(+) = L-xylo-3-hexulose + NADPH + H(+). It functions in the pathway carbohydrate degradation. L-xylulose reductase involved in the catabolism of D-galactose through an oxidoreductive pathway. Catalyzes the NADPH-dependent reduction of L-xylo-3-hexulose. Is also active with D-ribulose and L-xylulose, and to a lesser extent with D-xylulose, D-fructose and L- and D-sorbose. In the reverse reaction, shows activity with D-sorbitol and D-mannitol, low activity with xylitol, but no activity with galactitol, ribitol, and L- and D-arabitol. This Hypocrea jecorina (strain QM6a) (Trichoderma reesei) protein is L-xylo-3-hexulose reductase.